The primary structure comprises 876 residues: Leucine--tRNA ligase (876 aa).

A 'HIGH' region motif is present at residues 43-53; that stretch reads PYPSGRIHMGH. Positions 632–636 match the 'KMSKS' region motif; the sequence is KMSKS. Residue Lys-635 coordinates ATP.

This sequence belongs to the class-I aminoacyl-tRNA synthetase family.

Its subcellular location is the cytoplasm. It catalyses the reaction tRNA(Leu) + L-leucine + ATP = L-leucyl-tRNA(Leu) + AMP + diphosphate. This is Leucine--tRNA ligase from Rhizobium etli (strain CIAT 652).